A 533-amino-acid polypeptide reads, in one-letter code: MLVSDLVATSERVAALSRRVEKIGALAALLRRFSPAEVQIGVDWLTGRLRQGRLGLGPSVFAEARRASPSVAQPALTLGDADAVFTEIARASGPGAGGERRAALAGLFARATDLERDFFARLLAGELRQERLEPVMVDAVARAARVPPASLRRAVMLAGDAAEVVKAALLEGALGLQRFSLQLLRPVQPMLAQSADDVVTALSELRAMALEWKLDGVRVQAHKAGDEVRVFSRGLGPVTKAVPEIVEIVRALPVRSVVLDGEALAFRPDGAPHPFQVTMRRFGRAHDAAALRAELPLRALFFDVLHLDGEDLLDRPGSERTAALRQVLDRSLRVPRIELPTAAEAEAFFADALAHGHEGVIAKSLAAPYEAGRRRGTWLKVKRARTLDLVVLAAEWGTGRRRGLLSNLHIGARDPAAGGFVLLGKTFKGMNDEVLAWQTQRLLELEIGRDADTVYVRPEIVVEVAFDGLQSSPRYPGGVALRSARVKRYRPDKPAGEISTMDEVRAIHAGALAGEAAEKGQAEGGGEELEDDG.

ATP is bound at residue E211. K213 functions as the N6-AMP-lysine intermediate in the catalytic mechanism. 6 residues coordinate ATP: R218, R233, E262, F302, R374, and K380. The disordered stretch occupies residues 512–533 (LAGEAAEKGQAEGGGEELEDDG).

Belongs to the ATP-dependent DNA ligase family. Requires Mg(2+) as cofactor.

The catalysed reaction is ATP + (deoxyribonucleotide)n-3'-hydroxyl + 5'-phospho-(deoxyribonucleotide)m = (deoxyribonucleotide)n+m + AMP + diphosphate.. In terms of biological role, DNA ligase that seals nicks in double-stranded DNA during DNA replication, DNA recombination and DNA repair. This chain is Probable DNA ligase, found in Sorangium cellulosum (strain So ce56) (Polyangium cellulosum (strain So ce56)).